We begin with the raw amino-acid sequence, 569 residues long: Formate hydrogenlyase subunit 5 (569 aa).

Positions 538–569 are excised as a propeptide; the sequence is MTVVDVRKKKSKVVPYKELERYSIERKNSPLK.

The protein belongs to the complex I 49 kDa subunit family. In terms of assembly, FHL comprises of a formate dehydrogenase, unidentified electron carriers and a hydrogenase (isoenzyme 3). In this non-energy conserving pathway molecular hydrogen and carbodioxide from formate are released. [4Fe-4S] cluster serves as cofactor. The cofactor is Ni(2+).

The protein is Formate hydrogenlyase subunit 5 (hycE) of Escherichia coli (strain K12).